A 1522-amino-acid polypeptide reads, in one-letter code: Lysine-specific demethylase 5B (1522 aa).

One can recognise a JmjN domain in the interval 10–51 (CPVFEPSWEEFADPFAFIHKIRPIAEQTGICKVRPPPDWQPP). The 91-residue stretch at 75-165 (TRVKLNFLDQ…ILYPYNLFQS (91 aa)) folds into the ARID domain. Residues 180 to 192 (DTKDKEYKPHDIP) show a composition bias toward basic and acidic residues. A disordered region spans residues 180–229 (DTKDKEYKPHDIPQRQSVQPSESCPPARRAKRLRAEATNIKTESDSPEVR). Residues 284–334 (LYVCLLCGSGNDEDRLLLCDGCDDSYHTFCLIPPLHDVPKGDWRCPQCLAQ) form a PHD-type 1 zinc finger. A 2-oxoglutarate-binding site is contributed by Y400. One can recognise a JmjC domain in the interval 428 to 594 (EYLDSGWNLN…LGRQCIEHYR (167 aa)). H474 and E476 together coordinate Fe cation. Residues S482, N484, and K492 each contribute to the 2-oxoglutarate site. H562 is a binding site for Fe cation. Residues 667–719 (CYKCKTTCFMSAVYCPCKPGLLVCLYHVEDLCSCPTYQYKLGYRYTLEELYPM) form a C5HC2 zinc finger. A PHD-type 2 zinc finger spans residues 1151–1199 (LKVCVCQKEPAAPMIQCELCRGFFHTGCVSVPHALQGPRVWLCPQCRRS). Residues 1353 to 1365 (LQAEQKPSVGPSN) show a composition bias toward polar residues. 2 disordered regions span residues 1353–1373 (LQAE…CCRG) and 1400–1460 (ARVR…DSED). Residues 1400 to 1416 (ARVRKMRTPKKKKLKLS) are compositionally biased toward basic residues. Over residues 1426 to 1442 (RMERERERLLEAQRSSE) the composition is skewed to basic and acidic residues. The segment at 1462–1516 (DAICPAVTCLQPEGEEVDWVQCDGSCNQWFHQVCVGISPEMAEKEDYICASCAGK) adopts a PHD-type 3 zinc-finger fold.

Belongs to the JARID1 histone demethylase family. Fe(2+) serves as cofactor.

Its subcellular location is the nucleus. The catalysed reaction is N(6),N(6),N(6)-trimethyl-L-lysyl(4)-[histone H3] + 3 2-oxoglutarate + 3 O2 = L-lysyl(4)-[histone H3] + 3 formaldehyde + 3 succinate + 3 CO2. Histone demethylase that demethylates 'Lys-4' of histone H3, thereby playing a central role in histone code. Does not demethylate histone H3 'Lys-9' or H3 'Lys-27'. Demethylates trimethylated, dimethylated and monomethylated H3 'Lys-4'. Acts as a transcriptional corepressor. May repress the CLOCK-BMAL1 heterodimer-mediated transcriptional activation of the core clock component PER2. The protein is Lysine-specific demethylase 5B (KDM5B) of Gallus gallus (Chicken).